An 80-amino-acid polypeptide reads, in one-letter code: U20-ctenitoxin-Pn1a (80 aa).

Cystine bridges form between Cys3–Cys20, Cys10–Cys26, Cys17–Cys52, Cys19–Cys40, Cys28–Cys38, Cys58–Cys71, and Cys75–Cys80.

In terms of tissue distribution, expressed by the venom gland.

The protein localises to the secreted. Its function is as follows. Omega-agatoxin are antagonists of voltage-gated calcium channels (Cav). Induces rapid general flaccid paralysis followed by death when injected into the cerebral ventricle of mice at dose levels of 3 ug per mouse. This chain is U20-ctenitoxin-Pn1a, found in Phoneutria nigriventer (Brazilian armed spider).